Consider the following 591-residue polypeptide: Coiled-coil domain-containing protein 148 (591 aa).

Coiled-coil stretches lie at residues 166–195, 352–417, and 466–498; these read VKKQ…SIKI, MLAK…KKKK, and ERRL…KQVA.

The sequence is that of Coiled-coil domain-containing protein 148 (CCDC148) from Homo sapiens (Human).